The primary structure comprises 328 residues: tRNA uridine(34) hydroxylase (328 aa).

The Rhodanese domain maps to 130–224 (LDEDTVVLDT…YGKDPEVQGE (95 aa)). The active-site Cysteine persulfide intermediate is the cysteine 184.

Belongs to the TrhO family.

The catalysed reaction is uridine(34) in tRNA + AH2 + O2 = 5-hydroxyuridine(34) in tRNA + A + H2O. Its function is as follows. Catalyzes oxygen-dependent 5-hydroxyuridine (ho5U) modification at position 34 in tRNAs. The sequence is that of tRNA uridine(34) hydroxylase from Streptococcus pyogenes serotype M49 (strain NZ131).